A 71-amino-acid chain; its full sequence is Small ribosomal subunit protein bS21 (71 aa).

This sequence belongs to the bacterial ribosomal protein bS21 family.

This Thioalkalivibrio sulfidiphilus (strain HL-EbGR7) protein is Small ribosomal subunit protein bS21.